We begin with the raw amino-acid sequence, 587 residues long: Lipoprotein LpqB (587 aa).

Positions 1–19 (MERLMRLTILLFLGAVLAG) are cleaved as a signal peptide. The N-palmitoyl cysteine moiety is linked to residue cysteine 20. The S-diacylglycerol cysteine moiety is linked to residue cysteine 20.

This sequence belongs to the LpqB lipoprotein family.

It localises to the cell membrane. This is Lipoprotein LpqB from Mycobacterium bovis (strain ATCC BAA-935 / AF2122/97).